The primary structure comprises 572 residues: 3-ketosteroid oxygenase (572 aa).

A run of 2 helical transmembrane segments spans residues 52–72 (AFAL…RNFL) and 84–104 (YFMR…FIRI).

The protein belongs to the cytochrome P450 family. Expressed in the 2 embryonic head hypodermal cells XXXL/R.

It localises to the membrane. The catalysed reaction is 5alpha-cholest-7-en-3-one + 3 reduced [NADPH--hemoprotein reductase] + 3 O2 = (25S)-Delta7-dafachronate + 3 oxidized [NADPH--hemoprotein reductase] + 4 H2O + 4 H(+). It catalyses the reaction cholest-4-en-3-one + 3 reduced [NADPH--hemoprotein reductase] + 3 O2 = (25S)-3-oxocholest-4-en-26-oate + 3 oxidized [NADPH--hemoprotein reductase] + 4 H2O + 4 H(+). The protein operates within steroid hormone biosynthesis; dafachronic acid biosynthesis. Functionally, converts the 3-keto steroids 4-cholesten-3-one and lathosterone into the carboxylic metabolites 3-keto-4-cholestenate (Delta(4)-dafachronic acid, Delta(4)-DA) and 3-keto-7,(5a)-cholestenate (Delta(7)-dafachronic acid, Delta(7)-DA) respectively, by catalyzing successive oxidations at C-26. Dafachronic acids bind directly to the nuclear hormone receptor (NHR) DAF-12, suppressing dauer formation and inducing reproductive growth. In a non-cell autonomous manner, negatively regulates body wall muscle arm extensions to motor neurons probably by preventing daf-12 isoform b activation. May be involved in thermotolerance. This Caenorhabditis elegans protein is 3-ketosteroid oxygenase (daf-9).